The primary structure comprises 309 residues: MTKKVGLLVMAYGTPYKDEDIERYYTDIRHGHKPSEEMIADLRGRYHAIGGLSPLAKITEAQAYGLEKALNDSQDEVEFKAYIGLKHIEPFIEDAVEAMHKDGIEEAISIVLAPHYSSFSVEAYNKRAKEAADKLGGPRINAINDWYKQPKFIQMWADRINETAKQIPADELLDTVLIVSAHSLPEKIKQHNDPYPNQLQETADFIFEKVVVPHYALGWQSEGKTGEPWLGPDVQDLTRELYGREKYKHFIYTPVGFVAEHLEVLYDNDYECKVVTDEVGAAYHRPPMPNSDPEFLEVLRTVVWEKYSN.

Fe-coproporphyrin III is bound by residues tyrosine 12, threonine 14, arginine 29, 45 to 46 (RY), serine 53, and tyrosine 124. Residues histidine 182 and glutamate 263 each coordinate Fe(2+).

The protein belongs to the ferrochelatase family. Monomer.

Its subcellular location is the cytoplasm. It carries out the reaction Fe-coproporphyrin III + 2 H(+) = coproporphyrin III + Fe(2+). It functions in the pathway porphyrin-containing compound metabolism; protoheme biosynthesis. Involved in coproporphyrin-dependent heme b biosynthesis. Catalyzes the insertion of ferrous iron into coproporphyrin III to form Fe-coproporphyrin III. This chain is Coproporphyrin III ferrochelatase, found in Listeria monocytogenes serovar 1/2a (strain ATCC BAA-679 / EGD-e).